Consider the following 105-residue polypeptide: Large ribosomal subunit protein uL24 (105 aa).

Belongs to the universal ribosomal protein uL24 family. As to quaternary structure, part of the 50S ribosomal subunit.

In terms of biological role, one of two assembly initiator proteins, it binds directly to the 5'-end of the 23S rRNA, where it nucleates assembly of the 50S subunit. Its function is as follows. One of the proteins that surrounds the polypeptide exit tunnel on the outside of the subunit. The sequence is that of Large ribosomal subunit protein uL24 from Leptothrix cholodnii (strain ATCC 51168 / LMG 8142 / SP-6) (Leptothrix discophora (strain SP-6)).